We begin with the raw amino-acid sequence, 818 residues long: Cation/H(+) antiporter 6A (818 aa).

A run of 13 helical transmembrane segments spans residues 51 to 71 (NFWEYPLPNLEILIFSTFFIW), 88 to 110 (FTYMMIAGIILGQTCHFSNKSWI), 123 to 143 (VAETLGAFGFVLYWFLKGVTM), 156 to 176 (SVIGFITVIIPLICGSLTFRY), 192 to 212 (LIIFLQSISAFTSIDTLLKDL), 222 to 242 (IALSGAMVTDMLAFGVTFFNA), 248 to 268 (LYGFMQTVGFCLFVVVMICVV), 288 to 308 (FYLYSIFGIAFACFTFFNKVI), 310 to 330 (LFGPAGSFVFGLTVPNGYPLG), 340 to 360 (FNLGSILPLFGSLTMMQVDLL), 376 to 396 (IYEVISFILLVNTTKFVVTTI), 409 to 429 (FALALVLSNKGIFELAYYTYA), and 438 to 458 (EVFTILAAYTLLNSIFIPMLL).

Belongs to the monovalent cation:proton antiporter 2 (CPA2) transporter (TC 2.A.37) family. CHX (TC 2.A.37.4) subfamily. In terms of tissue distribution, preferentially expressed in pollen.

It localises to the membrane. May operate as a cation/H(+) antiporter. In Arabidopsis thaliana (Mouse-ear cress), this protein is Cation/H(+) antiporter 6A (CHX6a).